The chain runs to 401 residues: 3-hydroxyisobutyryl-CoA hydrolase-like protein 1, mitochondrial (401 aa).

A mitochondrion-targeting transit peptide spans 1–26 (MHNAKGLLGRIVRDKLWRFGYRRSLC).

This sequence belongs to the enoyl-CoA hydratase/isomerase family.

It is found in the mitochondrion. The sequence is that of 3-hydroxyisobutyryl-CoA hydrolase-like protein 1, mitochondrial from Arabidopsis thaliana (Mouse-ear cress).